The chain runs to 423 residues: Lysosomal acid phosphatase (423 aa).

An N-terminal signal peptide occupies residues 1–30 (MAGRQSGWSQAALLQFLLGMCLMVMPPIQA). The Lumenal portion of the chain corresponds to 31–380 (RSLRFVTLLY…QLASDTADTE (350 aa)). The Nucleophile role is filled by His42. Residues Asn92, Asn133, Asn167, Asn177, Asn191, Asn197, and Asn267 are each glycosylated (N-linked (GlcNAc...) asparagine). 3 cysteine pairs are disulfide-bonded: Cys159-Cys370, Cys212-Cys310, and Cys345-Cys349. Asp287 serves as the catalytic Proton donor. Asn322 and Asn331 each carry an N-linked (GlcNAc...) asparagine glycan. Residues 381–401 (VIVALAVCGSILFLLIVLLLT) traverse the membrane as a helical segment. Topologically, residues 402 to 423 (VLFRMQAQPPGYHHVADREDHA) are cytoplasmic.

Belongs to the histidine acid phosphatase family. The membrane-bound form is converted to the soluble form by sequential proteolytic processing. First, the C-terminal cytoplasmic tail is removed. Cleavage by a lysosomal protease releases the soluble form in the lysosome lumen.

Its subcellular location is the lysosome membrane. The protein localises to the lysosome lumen. The enzyme catalyses a phosphate monoester + H2O = an alcohol + phosphate. This chain is Lysosomal acid phosphatase (Acp2), found in Rattus norvegicus (Rat).